The primary structure comprises 306 residues: D-alanine--D-alanine ligase (306 aa).

Positions 102–300 constitute an ATP-grasp domain; sequence KIVVASVGVS…YGDIVQWMVE (199 aa). Residue 128 to 183 participates in ATP binding; it reads PMEPPYVIKPVCEGSSLGVIIVKENESVPSLNVVGSEWVYADTVIVEKYIPGRELT. Mg(2+)-binding residues include aspartate 253, glutamate 267, and asparagine 269.

This sequence belongs to the D-alanine--D-alanine ligase family. Mg(2+) is required as a cofactor. It depends on Mn(2+) as a cofactor.

Its subcellular location is the cytoplasm. The catalysed reaction is 2 D-alanine + ATP = D-alanyl-D-alanine + ADP + phosphate + H(+). It functions in the pathway cell wall biogenesis; peptidoglycan biosynthesis. Its function is as follows. Cell wall formation. The protein is D-alanine--D-alanine ligase of Bartonella henselae (strain ATCC 49882 / DSM 28221 / CCUG 30454 / Houston 1) (Rochalimaea henselae).